Consider the following 127-residue polypeptide: MAPGFHFSWLLVSWLVVTTVKGQDVMTPPGSQNNVNPTDCQIITLTPPPTTRNQLTRAQPVTRTPTFYFPPRRPGFYPRFPNIPFFPPNNRRFQLWPFYPPRGRLIPWRFFLGRRQLQSSSSEESLE.

An N-terminal signal peptide occupies residues 1-23 (MAPGFHFSWLLVSWLVVTTVKGQ).

Expressed in enamel organs and not expressed in the heart, kidney, or spleen.

The protein resides in the secreted. In terms of biological role, may promote nucleation of hydroxyapatite. The sequence is that of Odontogenesis-associated phosphoprotein from Rattus norvegicus (Rat).